We begin with the raw amino-acid sequence, 865 residues long: Alanine--tRNA ligase (865 aa).

His554, His558, Cys656, and His660 together coordinate Zn(2+).

Belongs to the class-II aminoacyl-tRNA synthetase family. The cofactor is Zn(2+).

It is found in the cytoplasm. The enzyme catalyses tRNA(Ala) + L-alanine + ATP = L-alanyl-tRNA(Ala) + AMP + diphosphate. Catalyzes the attachment of alanine to tRNA(Ala) in a two-step reaction: alanine is first activated by ATP to form Ala-AMP and then transferred to the acceptor end of tRNA(Ala). Also edits incorrectly charged Ser-tRNA(Ala) and Gly-tRNA(Ala) via its editing domain. This chain is Alanine--tRNA ligase, found in Francisella tularensis subsp. tularensis (strain FSC 198).